Here is an 84-residue protein sequence, read N- to C-terminus: Translation initiation factor IF-1, chloroplastic (84 aa).

An S1-like domain is found at 1–72 (MKKQNLVEME…SKGRITYRLR (72 aa)).

It belongs to the IF-1 family. As to quaternary structure, component of the 30S ribosomal translation pre-initiation complex which assembles on the 30S ribosome in the order IF-2 and IF-3, IF-1 and N-formylmethionyl-tRNA(fMet); mRNA recruitment can occur at any time during PIC assembly.

It localises to the plastid. Its subcellular location is the chloroplast. Its function is as follows. One of the essential components for the initiation of protein synthesis. Stabilizes the binding of IF-2 and IF-3 on the 30S subunit to which N-formylmethionyl-tRNA(fMet) subsequently binds. Helps modulate mRNA selection, yielding the 30S pre-initiation complex (PIC). Upon addition of the 50S ribosomal subunit IF-1, IF-2 and IF-3 are released leaving the mature 70S translation initiation complex. The sequence is that of Translation initiation factor IF-1, chloroplastic from Spirogyra maxima (Green alga).